The following is a 1365-amino-acid chain: Polyprotein ABA-1 (1365 aa).

It belongs to the NPA family. Post-translationally, nematode polyprotein allergens (NPAs) are synthesized as large polypeptides that are subsequently proteolytically cleaved to active polypeptide units. As to expression, pseudocoelomic fluid.

Its function is as follows. Has high binding affinity for fatty acids and retinoids. The polypeptide is Polyprotein ABA-1 (ABA-1) (Ascaris suum (Pig roundworm)).